A 150-amino-acid polypeptide reads, in one-letter code: Flagellar assembly factor FliW (150 aa).

Belongs to the FliW family. Interacts with translational regulator CsrA. Interacts with flagellins FlaB1, FlaB2 and FlaB3.

Its subcellular location is the cytoplasm. Acts as an anti-CsrA protein, binds CsrA and prevents it from repressing translation of its target genes, one of which is flagellin. Binds to flagellin and participates in the assembly of the flagellum. Its function is as follows. Binds to the C-terminal region of flagellin, which is implicated in polymerization, and participates in the assembly of the flagellum. In Treponema pallidum (strain Nichols), this protein is Flagellar assembly factor FliW.